The sequence spans 257 residues: Neurotrophin-3 (257 aa).

The first 18 residues, 1–18 (MSILFYMIFLAYLRGIQG), serve as a signal peptide directing secretion. A propeptide spanning residues 19 to 138 (NSMDQRRLPE…VANRTARRKR (120 aa)) is cleaved from the precursor. Positions 61-81 (STLPKAEAPREPERGEPAKSE) are disordered. Over residues 67–79 (EAPREPERGEPAK) the composition is skewed to basic and acidic residues. N-linked (GlcNAc...) asparagine glycosylation occurs at asparagine 131. Intrachain disulfides connect cysteine 152-cysteine 217, cysteine 195-cysteine 246, and cysteine 205-cysteine 248.

Belongs to the NGF-beta family.

Its subcellular location is the secreted. Functionally, seems to promote the survival of visceral and proprioceptive sensory neurons. The chain is Neurotrophin-3 (NTF3) from Sus scrofa (Pig).